Reading from the N-terminus, the 312-residue chain is Malate dehydrogenase (312 aa).

NAD(+) contacts are provided by residues 7–13 (GAAGGIG) and aspartate 34. Substrate-binding residues include arginine 81 and arginine 87. NAD(+) contacts are provided by residues asparagine 94 and 117–119 (ITN). Substrate contacts are provided by asparagine 119 and arginine 153. The active-site Proton acceptor is histidine 177. Residue methionine 227 coordinates NAD(+).

This sequence belongs to the LDH/MDH superfamily. MDH type 1 family. In terms of assembly, homodimer.

The enzyme catalyses (S)-malate + NAD(+) = oxaloacetate + NADH + H(+). In terms of biological role, catalyzes the reversible oxidation of malate to oxaloacetate. This chain is Malate dehydrogenase, found in Salmonella gallinarum (strain 287/91 / NCTC 13346).